A 56-amino-acid chain; its full sequence is MAAKGAREKIRLVSTAETGHFYTTTKNKRNMPEKMEIKKFDPVVRKHVIYKEAKIK.

It belongs to the bacterial ribosomal protein bL33 family.

This chain is Large ribosomal subunit protein bL33, found in Histophilus somni (strain 129Pt) (Haemophilus somnus).